The sequence spans 347 residues: Protein RecA (347 aa).

ATP is bound at residue 65–72 (GPESSGKT). Positions 327 to 336 (KFEPTELSRE) are enriched in basic and acidic residues. The interval 327–347 (KFEPTELSREEGDEDTLEDTM) is disordered. The segment covering 337 to 347 (EGDEDTLEDTM) has biased composition (acidic residues).

The protein belongs to the RecA family.

The protein localises to the cytoplasm. Functionally, can catalyze the hydrolysis of ATP in the presence of single-stranded DNA, the ATP-dependent uptake of single-stranded DNA by duplex DNA, and the ATP-dependent hybridization of homologous single-stranded DNAs. It interacts with LexA causing its activation and leading to its autocatalytic cleavage. This Xylella fastidiosa (strain 9a5c) protein is Protein RecA.